The primary structure comprises 349 residues: Hydroxymethylglutaryl-CoA synthase (349 aa).

2 residues coordinate (3S)-3-hydroxy-3-methylglutaryl-CoA: Asp-29 and Ala-30. Catalysis depends on Glu-81, which acts as the Proton donor/acceptor. Positions 113 and 154 each coordinate (3S)-3-hydroxy-3-methylglutaryl-CoA. Cys-113 serves as the catalytic Acyl-thioester intermediate. Arg-202 provides a ligand contact to CoA. (3S)-3-hydroxy-3-methylglutaryl-CoA-binding residues include Thr-204 and His-237. The active-site Proton donor/acceptor is His-237. CoA is bound at residue Lys-242. The (3S)-3-hydroxy-3-methylglutaryl-CoA site is built by Lys-246, Asn-269, and Ser-299.

The protein belongs to the thiolase-like superfamily. Archaeal HMG-CoA synthase family. As to quaternary structure, interacts with acetoacetyl-CoA thiolase that catalyzes the precedent step in the pathway and with a DUF35 protein. The acetoacetyl-CoA thiolase/HMG-CoA synthase complex channels the intermediate via a fused CoA-binding site, which allows for efficient coupling of the endergonic thiolase reaction with the exergonic HMGCS reaction.

It carries out the reaction acetoacetyl-CoA + acetyl-CoA + H2O = (3S)-3-hydroxy-3-methylglutaryl-CoA + CoA + H(+). It functions in the pathway metabolic intermediate biosynthesis; (R)-mevalonate biosynthesis; (R)-mevalonate from acetyl-CoA: step 2/3. Functionally, catalyzes the condensation of acetyl-CoA with acetoacetyl-CoA to form 3-hydroxy-3-methylglutaryl-CoA (HMG-CoA). Functions in the mevalonate (MVA) pathway leading to isopentenyl diphosphate (IPP), a key precursor for the biosynthesis of isoprenoid compounds that are building blocks of archaeal membrane lipids. The chain is Hydroxymethylglutaryl-CoA synthase from Methanosarcina mazei (strain ATCC BAA-159 / DSM 3647 / Goe1 / Go1 / JCM 11833 / OCM 88) (Methanosarcina frisia).